A 427-amino-acid chain; its full sequence is V-type proton ATPase subunit C 2 (427 aa).

The disordered stretch occupies residues 298 to 320 (PLGNPARPAAGQTDRDRESEGEG).

It belongs to the V-ATPase C subunit family. V-ATPase is a heteromultimeric enzyme made up of two complexes: the ATP-hydrolytic V1 complex and the proton translocation V0 complex. The V1 complex consists of three catalytic AB heterodimers that form a heterohexamer, three peripheral stalks each consisting of EG heterodimers, one central rotor including subunits D and F, and the regulatory subunits C and H. The proton translocation complex V0 consists of the proton transport subunit a, a ring of proteolipid subunits c9c'', rotary subunit d, subunits e and f, and the accessory subunits ATP6AP1/Ac45 and ATP6AP2/PRR. In terms of tissue distribution, predominantly expressed in the lung and kidney. Isoform 1 is lung-specific while isoform 3 is a kidney-specific isoform. Isoform 1 is localized in the lamellar bodies of type II alveolar cells. Isoform 2 is strongly expressed in the cortical and medulla collecting ducts and is found in the plasma membranes of renal alpha and beta intercalated cells.

Subunit of the V1 complex of vacuolar(H+)-ATPase (V-ATPase), a multisubunit enzyme composed of a peripheral complex (V1) that hydrolyzes ATP and a membrane integral complex (V0) that translocates protons. V-ATPase is responsible for acidifying and maintaining the pH of intracellular compartments and in some cell types, is targeted to the plasma membrane, where it is responsible for acidifying the extracellular environment. Subunit C is necessary for the assembly of the catalytic sector of the enzyme and is likely to have a specific function in its catalytic activity. The protein is V-type proton ATPase subunit C 2 (Atp6v1c2) of Mus musculus (Mouse).